Reading from the N-terminus, the 338-residue chain is D-alanine--D-alanine ligase (338 aa).

An ATP-grasp domain is found at K120–K324. ATP is bound at residue P150–T205. The Mg(2+) site is built by D277, E291, and N293.

The protein belongs to the D-alanine--D-alanine ligase family. Mg(2+) is required as a cofactor. Requires Mn(2+) as cofactor.

It localises to the cytoplasm. It carries out the reaction 2 D-alanine + ATP = D-alanyl-D-alanine + ADP + phosphate + H(+). Its pathway is cell wall biogenesis; peptidoglycan biosynthesis. Functionally, cell wall formation. This is D-alanine--D-alanine ligase from Polaromonas sp. (strain JS666 / ATCC BAA-500).